Here is a 501-residue protein sequence, read N- to C-terminus: MLO-like protein 5 (501 aa).

Residues 1–22 lie on the Extracellular side of the membrane; sequence MAGGGGGSTSGEGPRELDQTPT. A helical membrane pass occupies residues 23–43; sequence WAVSTVCGVIILISIVLELMI. Residues 44–68 are Cytoplasmic-facing; the sequence is HKIGEVFTERRKKALYEALQKIKNE. The chain crosses the membrane as a helical span at residues 69-89; sequence LMVLGFISLLLTFGQNYIASL. Residues 90–151 lie on the Extracellular side of the membrane; the sequence is CVASRYGHAM…ISLNALHQVH (62 aa). A helical membrane pass occupies residues 152–172; the sequence is IFIFFLAVFHVIYSAITMMLG. The Cytoplasmic portion of the chain corresponds to 173–273; it reads RAKIRGWKVW…IKRSLEDDFK (101 aa). The helical transmembrane segment at 274–294 threads the bilayer; the sequence is VVVGISPELWAFVMLFLLFDV. A topological domain (extracellular) is located at residue H295. A helical transmembrane segment spans residues 296-316; the sequence is GWYVTAVITMIPPLLTLAIGT. Topologically, residues 317–359 are cytoplasmic; it reads KLQAIISDMALEIQERHAVIQGMPLVNVSDRHFWFSRPALVLH. A helical membrane pass occupies residues 360–380; that stretch reads IIHFILFQNAFEITYFFWIWY. Residues 381–391 lie on the Extracellular side of the membrane; that stretch reads EFGLRSCFHHH. Residues 392–412 traverse the membrane as a helical segment; that stretch reads FALIIIRVALGVGVQFLCSYI. Topologically, residues 413–501 are cytoplasmic; that stretch reads TLPLYALVTQ…SQSRDLLSGP (89 aa). Residues 443 to 501 form a disordered region; that stretch reads WHKNAKKKSETPGQTQPPLPNLRPKTGGDIESASPANITASVDVKESDQSQSRDLLSGP. Positions 450-471 are calmodulin-binding; that stretch reads KSETPGQTQPPLPNLRPKTGGD. Polar residues predominate over residues 491-501; sequence QSQSRDLLSGP.

Belongs to the MLO family.

It localises to the membrane. Functionally, may be involved in modulation of pathogen defense and leaf cell death. Activity seems to be regulated by Ca(2+)-dependent calmodulin binding and seems not to require heterotrimeric G proteins. The sequence is that of MLO-like protein 5 (MLO5) from Arabidopsis thaliana (Mouse-ear cress).